We begin with the raw amino-acid sequence, 274 residues long: NAD(P)H dehydrogenase [quinone] 1 (274 aa).

Residues histidine 12, 18–19 (FN), and glutamine 67 contribute to the FAD site. At serine 82 the chain carries Phosphoserine. 104 to 107 (LQWF) serves as a coordination point for FAD. 126–128 (AYT) is a binding site for substrate. FAD contacts are provided by residues 148 to 151 (TTGG), tyrosine 156, and arginine 201. The segment at 225 to 274 (PSSLFDLNFQAGFLMKKEVQDEEKNKKFGLSVGHHLGKSIPTDNQIKARK) is important for apoenzyme conformational stability. Glycyl lysine isopeptide (Lys-Gly) (interchain with G-Cter in SUMO2) cross-links involve residues lysine 250 and lysine 251.

This sequence belongs to the NAD(P)H dehydrogenase (quinone) family. As to quaternary structure, homodimer. Interacts with PDLIM4 isoform 2; this interaction stabilizes PDLIM4 isoform 2 in response to oxidative stress and protects it from ubiquitin-independent degradation by the core 20S proteasome. Interacts with TP73 (via SAM domain); this interaction is NADH-dependent, stabilizes TP73 in response to oxidative stress and protects it from ubiquitin-independent degradation by the 20S proteasome. Interacts with TP53; this interaction is NADH-dependent, stabilizes TP53 in response to oxidative stress and protects it from ubiquitin-independent degradation by the 20S proteasome. The cofactor is FAD.

Its subcellular location is the cytoplasm. The protein localises to the cytosol. The enzyme catalyses a quinone + NADH + H(+) = a quinol + NAD(+). The catalysed reaction is a quinone + NADPH + H(+) = a quinol + NADP(+). It catalyses the reaction ubiquinone-10 + NADH + H(+) = ubiquinol-10 + NAD(+). It carries out the reaction menadione + NADH + H(+) = menadiol + NAD(+). Inhibited by dicoumarol. Flavin-containing quinone reductase that catalyzes two-electron reduction of quinones to hydroquinones using either NADH or NADPH as electron donors. In a ping-pong kinetic mechanism, the electrons are sequentially transferred from NAD(P)H to flavin cofactor and then from reduced flavin to the quinone, bypassing the formation of semiquinone and reactive oxygen species. Regulates cellular redox state primarily through quinone detoxification. Reduces components of plasma membrane redox system such as coenzyme Q and vitamin quinones, producing antioxidant hydroquinone forms. In the process may function as superoxide scavenger to prevent hydroquinone oxidation and facilitate excretion. Alternatively, can activate quinones and their derivatives by generating redox reactive hydroquinones with DNA cross-linking antitumor potential. Acts as a gatekeeper of the core 20S proteasome known to degrade proteins with unstructured regions. Upon oxidative stress, interacts with tumor suppressors TP53 and TP73 in a NADH-dependent way and inhibits their ubiquitin-independent degradation by the 20S proteasome. This is NAD(P)H dehydrogenase [quinone] 1 from Homo sapiens (Human).